The chain runs to 194 residues: Protein GrpE (194 aa).

A compositionally biased stretch (basic and acidic residues) spans 1–12 (MNKQKNNRERTP). The tract at residues 1–44 (MNKQKNNRERTPQPEQDTERDEQLTNSHENDIDSAPAAEENDKV) is disordered.

The protein belongs to the GrpE family. In terms of assembly, homodimer.

The protein localises to the cytoplasm. In terms of biological role, participates actively in the response to hyperosmotic and heat shock by preventing the aggregation of stress-denatured proteins, in association with DnaK and GrpE. It is the nucleotide exchange factor for DnaK and may function as a thermosensor. Unfolded proteins bind initially to DnaJ; upon interaction with the DnaJ-bound protein, DnaK hydrolyzes its bound ATP, resulting in the formation of a stable complex. GrpE releases ADP from DnaK; ATP binding to DnaK triggers the release of the substrate protein, thus completing the reaction cycle. Several rounds of ATP-dependent interactions between DnaJ, DnaK and GrpE are required for fully efficient folding. The polypeptide is Protein GrpE (Porphyromonas gingivalis (strain ATCC 33277 / DSM 20709 / CIP 103683 / JCM 12257 / NCTC 11834 / 2561)).